Reading from the N-terminus, the 152-residue chain is Ribosome maturation factor RimP (152 aa).

Belongs to the RimP family.

Its subcellular location is the cytoplasm. Functionally, required for maturation of 30S ribosomal subunits. The sequence is that of Ribosome maturation factor RimP from Citrobacter koseri (strain ATCC BAA-895 / CDC 4225-83 / SGSC4696).